Reading from the N-terminus, the 155-residue chain is Interleukin-2 (155 aa).

The signal sequence occupies residues 1-20; it reads MYSMQLASCVALTLVLLVNS. An O-linked (GalNAc...) threonine glycan is attached at T23. Residues C78 and C126 are joined by a disulfide bond.

Belongs to the IL-2 family.

The protein localises to the secreted. Cytokine produced by activated CD4-positive helper T-cells and to a lesser extend activated CD8-positive T-cells and natural killer (NK) cells that plays pivotal roles in the immune response and tolerance. Binds to a receptor complex composed of either the high-affinity trimeric IL-2R (IL2RA/CD25, IL2RB/CD122 and IL2RG/CD132) or the low-affinity dimeric IL-2R (IL2RB and IL2RG). Interaction with the receptor leads to oligomerization and conformation changes in the IL-2R subunits resulting in downstream signaling starting with phosphorylation of JAK1 and JAK3. In turn, JAK1 and JAK3 phosphorylate the receptor to form a docking site leading to the phosphorylation of several substrates including STAT5. This process leads to activation of several pathways including STAT, phosphoinositide-3-kinase/PI3K and mitogen-activated protein kinase/MAPK pathways. Functions as a T-cell growth factor and can increase NK-cell cytolytic activity as well. Promotes strong proliferation of activated B-cells and subsequently immunoglobulin production. Plays a pivotal role in regulating the adaptive immune system by controlling the survival and proliferation of regulatory T-cells, which are required for the maintenance of immune tolerance. Moreover, participates in the differentiation and homeostasis of effector T-cell subsets, including Th1, Th2, Th17 as well as memory CD8-positive T-cells. The polypeptide is Interleukin-2 (Il2) (Rattus norvegicus (Rat)).